Consider the following 950-residue polypeptide: MEEKEQLRRQIRLLQGLIDDYKTLHGNGPALGNSSATRWQPPMFPGGRTFGARYSRPSRRGFSSHHGPSWRKKYSLVNQPVESSDPASDPAFQTSLRSEDSQHPEPQQYVLERQVQLSPDQNMVIKIKPPSKSGAINASGVQRGSLEGCDDPSWSGQRPQGSEVEVPGGQLQPARPGRTKVGYSVDDPLLVCQKEPGKPRVVKSVGRVSDSSPEHRRTVSENEVALRVHFPSVLPHHTAVALGRKVGPHSTSYSEQFIGDQRANTGHSDQPASLGPVVASVRPATARQVREASLLVSCRTSKFRKNNYKWVAASEKSPRVARRALSPRTTLESGNKATLGTVGKTEKPQPKVDPEVRPEKLATPSKPGLSPSKYKWKASSPSASSSSSFRWQSEAGSKDHTSQLSPVPSRPTSGDRPAGGPSSLKPLFGESQLSAYKVKSRTKIIRRRGNTSIPGDKKNSPTTATTSKNHLTQRRRQALRGKNSPVLRKTPHKGLMQVNRHRLCCLPSSRTHLSTKEASSVHMGIPPSNKVIKTRYRIVKKTPSSSFGAPSFPSSLPSWRARRIPLSRSLVLNRLRPAITGGGKAPPGTPRWRNKGYRCIGGVLYKVSANKLSKTSSRPSDGNRTLLRTGRLDPATTCSRSLASRAIQRSLAIIRQAKQKKEKKREYCMYYNRFGRCNRGECCPYIHDPEKVAVCTRFVRGTCKKTDGSCPFSHHVSKEKMPVCSYFLKGICSNSNCPYSHVYVSRKAEVCSDFLKGYCPLGAKCKKKHTLLCPDFARRGICPRGSQCQLLHRNQKRHGRRTAAPPIPGPSDGAPRSKASAGHVLRKPTTTQRSVRQMSSGLASGAEAPASPPPSPRVLASTSTLSSKATAASSPSPSPSTSSPAPSLEQEEAVSGTGSGTGSSGLCKLPSFISLHSSPSPGGQTETGPQAPRSPRTKDSGKPLHIKPRL.

Disordered regions lie at residues 32–106 (GNSS…HPEP), 127–182 (IKPP…TKVG), 201–220 (VVKS…RTVS), and 314–489 (SEKS…VLRK). A compositionally biased stretch (basic residues) spans 56-74 (RPSRRGFSSHHGPSWRKKY). A compositionally biased stretch (polar residues) spans 76 to 96 (LVNQPVESSDPASDPAFQTSL). Polar residues predominate over residues 327-338 (PRTTLESGNKAT). Positions 344-360 (KTEKPQPKVDPEVRPEK) are enriched in basic and acidic residues. The span at 370 to 388 (SPSKYKWKASSPSASSSSS) shows a compositional bias: low complexity. Residues 402–412 (SQLSPVPSRPT) are compositionally biased toward polar residues. Ser405 is subject to Phosphoserine. Over residues 438–449 (VKSRTKIIRRRG) the composition is skewed to basic residues. A compositionally biased stretch (polar residues) spans 460-470 (SPTTATTSKNH). 5 C3H1-type zinc fingers span residues 662–690 (EKKR…HDPE), 694–717 (VCTR…HHVS), 718–744 (KEKM…HVYV), 745–772 (SRKA…HTLL), and 773–795 (CPDF…HRNQ). A disordered region spans residues 793-950 (RNQKRHGRRT…GKPLHIKPRL (158 aa)). Polar residues predominate over residues 828-838 (PTTTQRSVRQM). Residues 839 to 849 (SSGLASGAEAP) are compositionally biased toward low complexity. Phosphoserine occurs at positions 851 and 855. Residues 857-888 (RVLASTSTLSSKATAASSPSPSPSTSSPAPSL) show a composition bias toward low complexity. Residues 914–928 (SLHSSPSPGGQTETG) are compositionally biased toward polar residues. A phosphoserine mark is found at Ser918, Ser920, and Ser934.

As to quaternary structure, interacts with SMAD1, SMAD3, SMAD4, CPSF2 and CPSF3.

The protein resides in the nucleus. Its function is as follows. Required for the export of polyadenylated mRNAs from the nucleus. Enhances ACVR1B-induced SMAD-dependent transcription. Binds to single-stranded DNA but not to double-stranded DNA in vitro. Involved in RNA cleavage. The chain is Zinc finger CCCH domain-containing protein 3 (Zc3h3) from Mus musculus (Mouse).